The primary structure comprises 258 residues: 4-hydroxy-2-oxovalerate aldolase (258 aa).

His-48 serves as the catalytic Proton acceptor. Gln-149 is a substrate binding site. Position 151 (Glu-151) interacts with Mg(2+). Residues Ala-176 and Asp-177 each coordinate substrate. Asp-177 is a Mg(2+) binding site.

Belongs to the HpcH/HpaI aldolase family.

It catalyses the reaction (S)-4-hydroxy-2-oxopentanoate = acetaldehyde + pyruvate. It functions in the pathway xenobiotic degradation; biphenyl degradation. In terms of biological role, catalyzes the reversible retro-aldol cleavage of 4-hydroxy-2-oxovalerate to pyruvate and acetaldehyde. The protein is 4-hydroxy-2-oxovalerate aldolase (bphF) of Rhodococcus jostii (strain RHA1).